The chain runs to 484 residues: Putative transporter B0252.3 (484 aa).

The next 11 helical transmembrane spans lie at Ile43–Cys63, Ser95–Ala115, Leu121–Ser141, Ile144–Ala164, Val183–Leu203, Tyr208–Val228, Met286–Phe306, Leu321–Met341, Val348–Ser368, Ile373–Phe393, and Leu433–Leu453.

It belongs to the major facilitator superfamily. Sugar transporter (TC 2.A.1.1) family.

It is found in the membrane. The polypeptide is Putative transporter B0252.3 (Caenorhabditis elegans).